The following is a 418-amino-acid chain: Cobalt-zinc-cadmium resistance protein CzcC (418 aa).

The signal sequence occupies residues 1 to 22 (MRRLFLPLGLAVAFLSPNFAVA).

It belongs to the outer membrane factor (OMF) (TC 1.B.17) family.

The protein resides in the cell outer membrane. In terms of biological role, czcC protein appears to modify the specificity of the system, perhaps by acting on the CzcB protein. When the CzcC protein is added to CzcA and CzcB, the efflux system gains specificity for cadmium and cobalt. The sequence is that of Cobalt-zinc-cadmium resistance protein CzcC (czcC) from Cupriavidus metallidurans (strain ATCC 43123 / DSM 2839 / NBRC 102507 / CH34) (Ralstonia metallidurans).